The primary structure comprises 338 residues: Anthranilate phosphoribosyltransferase (338 aa).

5-phospho-alpha-D-ribose 1-diphosphate is bound by residues glycine 80, 83–84 (GD), threonine 88, 90–93 (NIST), 108–116 (KHGNRAVSS), and serine 120. Glycine 80 provides a ligand contact to anthranilate. Serine 92 provides a ligand contact to Mg(2+). Asparagine 111 is an anthranilate binding site. Residue arginine 166 participates in anthranilate binding. Aspartate 225 and glutamate 226 together coordinate Mg(2+).

It belongs to the anthranilate phosphoribosyltransferase family. In terms of assembly, homodimer. The cofactor is Mg(2+).

The enzyme catalyses N-(5-phospho-beta-D-ribosyl)anthranilate + diphosphate = 5-phospho-alpha-D-ribose 1-diphosphate + anthranilate. The protein operates within amino-acid biosynthesis; L-tryptophan biosynthesis; L-tryptophan from chorismate: step 2/5. Catalyzes the transfer of the phosphoribosyl group of 5-phosphorylribose-1-pyrophosphate (PRPP) to anthranilate to yield N-(5'-phosphoribosyl)-anthranilate (PRA). The polypeptide is Anthranilate phosphoribosyltransferase (Thermoanaerobacter sp. (strain X514)).